The following is a 103-amino-acid chain: Large ribosomal subunit protein uL24 (103 aa).

This sequence belongs to the universal ribosomal protein uL24 family. In terms of assembly, part of the 50S ribosomal subunit.

One of two assembly initiator proteins, it binds directly to the 5'-end of the 23S rRNA, where it nucleates assembly of the 50S subunit. In terms of biological role, one of the proteins that surrounds the polypeptide exit tunnel on the outside of the subunit. The polypeptide is Large ribosomal subunit protein uL24 (Endomicrobium trichonymphae).